The chain runs to 151 residues: MVAERTFLAIKPDGVQRGLVGEILSRFERKGFKLIALKQLIPSRALAEQHYGVHRERPFFKGLVDFITSGPVIAMIWEGEGVILGARKLIGSTKPLDADPGTIRGDLAIDIGRNVIHGSDGPETASFEIGLWFESSELSDWNPSDQLWRVE.

ATP contacts are provided by Lys-11, Phe-59, Arg-87, Thr-93, Arg-104, and Asn-114. His-117 (pros-phosphohistidine intermediate) is an active-site residue.

It belongs to the NDK family. In terms of assembly, homotetramer. It depends on Mg(2+) as a cofactor.

It is found in the cytoplasm. It carries out the reaction a 2'-deoxyribonucleoside 5'-diphosphate + ATP = a 2'-deoxyribonucleoside 5'-triphosphate + ADP. The catalysed reaction is a ribonucleoside 5'-diphosphate + ATP = a ribonucleoside 5'-triphosphate + ADP. Its function is as follows. Major role in the synthesis of nucleoside triphosphates other than ATP. The ATP gamma phosphate is transferred to the NDP beta phosphate via a ping-pong mechanism, using a phosphorylated active-site intermediate. The sequence is that of Nucleoside diphosphate kinase from Prochlorococcus marinus (strain MIT 9211).